The chain runs to 393 residues: Formate-dependent phosphoribosylglycinamide formyltransferase (393 aa).

Residues 22–23 and Glu82 contribute to the N(1)-(5-phospho-beta-D-ribosyl)glycinamide site; that span reads EL. Residues Arg114, Lys155, 160–165, 195–198, and Glu203 contribute to the ATP site; these read SSGKGQ and EGFI. The ATP-grasp domain maps to 119-308; sequence RLAAEELKLP…QFALHARAIL (190 aa). Residues Glu267 and Glu279 each contribute to the Mg(2+) site. Residues Asp286, Lys356, and 363 to 364 contribute to the N(1)-(5-phospho-beta-D-ribosyl)glycinamide site; that span reads RR.

The protein belongs to the PurK/PurT family. Homodimer.

The enzyme catalyses N(1)-(5-phospho-beta-D-ribosyl)glycinamide + formate + ATP = N(2)-formyl-N(1)-(5-phospho-beta-D-ribosyl)glycinamide + ADP + phosphate + H(+). The protein operates within purine metabolism; IMP biosynthesis via de novo pathway; N(2)-formyl-N(1)-(5-phospho-D-ribosyl)glycinamide from N(1)-(5-phospho-D-ribosyl)glycinamide (formate route): step 1/1. In terms of biological role, involved in the de novo purine biosynthesis. Catalyzes the transfer of formate to 5-phospho-ribosyl-glycinamide (GAR), producing 5-phospho-ribosyl-N-formylglycinamide (FGAR). Formate is provided by PurU via hydrolysis of 10-formyl-tetrahydrofolate. The sequence is that of Formate-dependent phosphoribosylglycinamide formyltransferase from Pseudomonas savastanoi pv. phaseolicola (strain 1448A / Race 6) (Pseudomonas syringae pv. phaseolicola (strain 1448A / Race 6)).